We begin with the raw amino-acid sequence, 218 residues long: Cytidylate kinase (218 aa).

Residue 11–19 (GPSGVGKST) participates in ATP binding.

It belongs to the cytidylate kinase family. Type 1 subfamily.

It localises to the cytoplasm. The enzyme catalyses CMP + ATP = CDP + ADP. It carries out the reaction dCMP + ATP = dCDP + ADP. This Mycoplasmopsis synoviae (strain 53) (Mycoplasma synoviae) protein is Cytidylate kinase.